A 238-amino-acid chain; its full sequence is Orotidine 5'-phosphate decarboxylase (238 aa).

Substrate-binding positions include D11, K32, 59 to 68 (DLKFHDIPNT), T123, R185, Q194, G214, and R215. Residue K61 is the Proton donor of the active site.

It belongs to the OMP decarboxylase family. Type 1 subfamily. In terms of assembly, homodimer.

It catalyses the reaction orotidine 5'-phosphate + H(+) = UMP + CO2. Its pathway is pyrimidine metabolism; UMP biosynthesis via de novo pathway; UMP from orotate: step 2/2. Its function is as follows. Catalyzes the decarboxylation of orotidine 5'-monophosphate (OMP) to uridine 5'-monophosphate (UMP). This Nostoc sp. (strain PCC 7120 / SAG 25.82 / UTEX 2576) protein is Orotidine 5'-phosphate decarboxylase.